The following is a 273-amino-acid chain: 4-hydroxy-tetrahydrodipicolinate reductase (273 aa).

Residues 12–17 and Glu-38 contribute to the NAD(+) site; that span reads GAGGRM. Arg-39 is a binding site for NADP(+). Residues 102-104 and 126-129 each bind NAD(+); these read GTT and AANF. Catalysis depends on His-159, which acts as the Proton donor/acceptor. Residue His-160 coordinates (S)-2,3,4,5-tetrahydrodipicolinate. The active-site Proton donor is the Lys-163. 169–170 serves as a coordination point for (S)-2,3,4,5-tetrahydrodipicolinate; sequence GT.

It belongs to the DapB family. In terms of assembly, homotetramer.

Its subcellular location is the cytoplasm. It catalyses the reaction (S)-2,3,4,5-tetrahydrodipicolinate + NAD(+) + H2O = (2S,4S)-4-hydroxy-2,3,4,5-tetrahydrodipicolinate + NADH + H(+). The catalysed reaction is (S)-2,3,4,5-tetrahydrodipicolinate + NADP(+) + H2O = (2S,4S)-4-hydroxy-2,3,4,5-tetrahydrodipicolinate + NADPH + H(+). It participates in amino-acid biosynthesis; L-lysine biosynthesis via DAP pathway; (S)-tetrahydrodipicolinate from L-aspartate: step 4/4. Its function is as follows. Catalyzes the conversion of 4-hydroxy-tetrahydrodipicolinate (HTPA) to tetrahydrodipicolinate. This Yersinia pseudotuberculosis serotype O:1b (strain IP 31758) protein is 4-hydroxy-tetrahydrodipicolinate reductase.